Consider the following 120-residue polypeptide: Urease subunit beta (120 aa).

It belongs to the urease beta subunit family. In terms of assembly, heterotrimer of UreA (gamma), UreB (beta) and UreC (alpha) subunits. Three heterotrimers associate to form the active enzyme.

The protein localises to the cytoplasm. It carries out the reaction urea + 2 H2O + H(+) = hydrogencarbonate + 2 NH4(+). Its pathway is nitrogen metabolism; urea degradation; CO(2) and NH(3) from urea (urease route): step 1/1. The chain is Urease subunit beta from Corynebacterium efficiens (strain DSM 44549 / YS-314 / AJ 12310 / JCM 11189 / NBRC 100395).